Consider the following 498-residue polypeptide: Lysine--tRNA ligase (498 aa).

Mg(2+) contacts are provided by Glu-409 and Glu-416.

It belongs to the class-II aminoacyl-tRNA synthetase family. As to quaternary structure, homodimer. Mg(2+) is required as a cofactor.

It localises to the cytoplasm. The enzyme catalyses tRNA(Lys) + L-lysine + ATP = L-lysyl-tRNA(Lys) + AMP + diphosphate. This is Lysine--tRNA ligase from Dichelobacter nodosus (strain VCS1703A).